Reading from the N-terminus, the 91-residue chain is UPF0223 protein SACOL1106 (91 aa).

Belongs to the UPF0223 family.

The chain is UPF0223 protein SACOL1106 from Staphylococcus aureus (strain COL).